The following is a 473-amino-acid chain: Ribulose bisphosphate carboxylase large chain (473 aa).

The propeptide occupies 1–2; that stretch reads MS. Residue P3 is modified to N-acetylproline. Position 14 is an N6,N6,N6-trimethyllysine (K14). 2 residues coordinate substrate: N123 and T173. K175 (proton acceptor) is an active-site residue. K177 serves as a coordination point for substrate. Mg(2+) is bound by residues K201, D203, and E204. K201 carries the N6-carboxylysine modification. H294 serves as the catalytic Proton acceptor. Substrate contacts are provided by R295, H327, and S379.

This sequence belongs to the RuBisCO large chain family. Type I subfamily. In terms of assembly, heterohexadecamer of 8 large chains and 8 small chains; disulfide-linked. The disulfide link is formed within the large subunit homodimers. The cofactor is Mg(2+). In terms of processing, the disulfide bond which can form in the large chain dimeric partners within the hexadecamer appears to be associated with oxidative stress and protein turnover.

The protein resides in the plastid. Its subcellular location is the chloroplast. The enzyme catalyses 2 (2R)-3-phosphoglycerate + 2 H(+) = D-ribulose 1,5-bisphosphate + CO2 + H2O. It catalyses the reaction D-ribulose 1,5-bisphosphate + O2 = 2-phosphoglycolate + (2R)-3-phosphoglycerate + 2 H(+). Its function is as follows. RuBisCO catalyzes two reactions: the carboxylation of D-ribulose 1,5-bisphosphate, the primary event in carbon dioxide fixation, as well as the oxidative fragmentation of the pentose substrate in the photorespiration process. Both reactions occur simultaneously and in competition at the same active site. The chain is Ribulose bisphosphate carboxylase large chain from Ajuga chamaepitys (Yellow bugle).